The sequence spans 243 residues: Pyridoxine 5'-phosphate synthase (243 aa).

Asparagine 9 serves as a coordination point for 3-amino-2-oxopropyl phosphate. 1-deoxy-D-xylulose 5-phosphate is bound at residue 11-12 (DH). Arginine 20 provides a ligand contact to 3-amino-2-oxopropyl phosphate. The active-site Proton acceptor is the histidine 45. Positions 47 and 52 each coordinate 1-deoxy-D-xylulose 5-phosphate. The active-site Proton acceptor is the glutamate 72. Threonine 102 is a binding site for 1-deoxy-D-xylulose 5-phosphate. The active-site Proton donor is the histidine 193. 3-amino-2-oxopropyl phosphate-binding positions include glycine 194 and 215 to 216 (GH).

It belongs to the PNP synthase family. In terms of assembly, homooctamer; tetramer of dimers.

It localises to the cytoplasm. The enzyme catalyses 3-amino-2-oxopropyl phosphate + 1-deoxy-D-xylulose 5-phosphate = pyridoxine 5'-phosphate + phosphate + 2 H2O + H(+). It functions in the pathway cofactor biosynthesis; pyridoxine 5'-phosphate biosynthesis; pyridoxine 5'-phosphate from D-erythrose 4-phosphate: step 5/5. Functionally, catalyzes the complicated ring closure reaction between the two acyclic compounds 1-deoxy-D-xylulose-5-phosphate (DXP) and 3-amino-2-oxopropyl phosphate (1-amino-acetone-3-phosphate or AAP) to form pyridoxine 5'-phosphate (PNP) and inorganic phosphate. This is Pyridoxine 5'-phosphate synthase from Escherichia coli O157:H7.